The sequence spans 503 residues: Probable cytosol aminopeptidase (503 aa).

Lys-274 and Asp-279 together coordinate Mn(2+). Lys-286 is a catalytic residue. Asp-297, Asp-356, and Glu-358 together coordinate Mn(2+). Arg-360 is an active-site residue.

It belongs to the peptidase M17 family. It depends on Mn(2+) as a cofactor.

It is found in the cytoplasm. The enzyme catalyses Release of an N-terminal amino acid, Xaa-|-Yaa-, in which Xaa is preferably Leu, but may be other amino acids including Pro although not Arg or Lys, and Yaa may be Pro. Amino acid amides and methyl esters are also readily hydrolyzed, but rates on arylamides are exceedingly low.. The catalysed reaction is Release of an N-terminal amino acid, preferentially leucine, but not glutamic or aspartic acids.. In terms of biological role, presumably involved in the processing and regular turnover of intracellular proteins. Catalyzes the removal of unsubstituted N-terminal amino acids from various peptides. The chain is Probable cytosol aminopeptidase from Burkholderia orbicola (strain MC0-3).